An 83-amino-acid polypeptide reads, in one-letter code: Delta-conotoxin-like MVIC (83 aa).

A signal peptide spans M1–A22. Residues D23–N49 constitute a propeptide that is removed on maturation. Cystine bridges form between C54/C69, C61/C73, and C68/C78. 4-hydroxyproline occurs at positions 56 and 65.

Belongs to the conotoxin O1 superfamily. In terms of tissue distribution, expressed by the venom duct.

The protein resides in the secreted. In terms of biological role, delta-conotoxins bind to site 6 of voltage-gated sodium channels (Nav) and inhibit the inactivation process. The protein is Delta-conotoxin-like MVIC of Conus magus (Magical cone).